We begin with the raw amino-acid sequence, 197 residues long: MDNVEKELFSQGYEKIVGIDEAGRGPLAGPLVIASVIFPKHQKPFIHTDSKGLSEKEREYLFEKIHDYAEEINITIVENTEIDKFGISNAAKIYMENNLKSLKSKWDIALVDFVKLDESINHLPLIKGDEISHTIAAASIIAKVVRDRIMIEYKEKYPNFSFDKHKGYATKQHYQEIKKFGITPIHRRSFNLGVNDD.

In terms of domain architecture, RNase H type-2 spans 14–197 (EKIVGIDEAG…RSFNLGVNDD (184 aa)). A divalent metal cation is bound by residues Asp-20, Glu-21, and Asp-112.

Belongs to the RNase HII family. Mn(2+) is required as a cofactor. The cofactor is Mg(2+).

The protein resides in the cytoplasm. The enzyme catalyses Endonucleolytic cleavage to 5'-phosphomonoester.. In terms of biological role, endonuclease that specifically degrades the RNA of RNA-DNA hybrids. This Sulfurihydrogenibium sp. (strain YO3AOP1) protein is Ribonuclease HII.